Reading from the N-terminus, the 499-residue chain is Uridine-cytidine kinase A (499 aa).

Positions 1–44 (MSDNSTTKVTTNDSPSLTTTTSTTTAPTTTTTTTTTPTHNHDTT) are disordered. Over residues 10-38 (TTNDSPSLTTTTSTTTAPTTTTTTTTTPT) the composition is skewed to low complexity. 78–85 (GGSASGKT) lines the ATP pocket.

The protein belongs to the uridine kinase family.

The catalysed reaction is uridine + ATP = UMP + ADP + H(+). It carries out the reaction cytidine + ATP = CMP + ADP + H(+). It functions in the pathway pyrimidine metabolism; CTP biosynthesis via salvage pathway; CTP from cytidine: step 1/3. Its pathway is pyrimidine metabolism; UMP biosynthesis via salvage pathway; UMP from uridine: step 1/1. Its function is as follows. Catalyzes the conversion of uridine into uridine monophosphate and cytidine into cytidine monophosphate in the pyrimidine salvage pathway. The polypeptide is Uridine-cytidine kinase A (udkA) (Dictyostelium discoideum (Social amoeba)).